The primary structure comprises 151 residues: Ribosome maturation factor RimP (151 aa).

The protein belongs to the RimP family.

The protein localises to the cytoplasm. In terms of biological role, required for maturation of 30S ribosomal subunits. The chain is Ribosome maturation factor RimP from Shewanella halifaxensis (strain HAW-EB4).